Reading from the N-terminus, the 289-residue chain is Nodulation protein NolT (289 aa).

A signal peptide spans 1–33; the sequence is MFGSAHGDTTSSDTSGRRPLRLVVLPLLLALSS. Cys34 carries the N-palmitoyl cysteine lipid modification. Cys34 is lipidated: S-diacylglycerol cysteine. The helical transmembrane segment at 233 to 253 threads the bilayer; it reads VAVGVGAAVFAVTCYLLFIVL.

The protein belongs to the YscJ lipoprotein family.

The protein resides in the cell outer membrane. Its function is as follows. Regulates cultivar-specific nodulation of soybean. In Rhizobium fredii (Sinorhizobium fredii), this protein is Nodulation protein NolT (nolT).